The chain runs to 210 residues: MSKKFKMKRAKNLNGFSIIHDYVTPDQEKKLLKKINESEWVVDYQRRLQYYNYRNELFEPYDLIPIPNKIPKYLDQLINQMILDKIIDQKPDQIIVNEYKPGEGLKPHFDRKDYYQNVIIGLSLGSGTIMEFYKNKPIPEKKKIYIPPRSLYIIKDDARYIWKHGIPPRKYDEINGKKIPRETRISITFRNVIKEKVKHDNIVYPKRSPN.

A Fe2OG dioxygenase domain is found at 90-193 (KPDQIIVNEY…RISITFRNVI (104 aa)).

This is an uncharacterized protein from Acanthamoeba polyphaga (Amoeba).